Consider the following 676-residue polypeptide: Methionine--tRNA ligase (676 aa).

Positions 15 to 25 (PYANGPIHLGH) match the 'HIGH' region motif. Zn(2+) is bound by residues cysteine 146, cysteine 149, cysteine 159, and cysteine 162. Positions 332–336 (KMSKS) match the 'KMSKS' region motif. Position 335 (lysine 335) interacts with ATP. The tRNA-binding domain occupies 575-676 (DFAKIDLRIA…EGAQPGMRVK (102 aa)).

It belongs to the class-I aminoacyl-tRNA synthetase family. MetG type 1 subfamily. In terms of assembly, homodimer. Zn(2+) serves as cofactor.

It localises to the cytoplasm. The catalysed reaction is tRNA(Met) + L-methionine + ATP = L-methionyl-tRNA(Met) + AMP + diphosphate. In terms of biological role, is required not only for elongation of protein synthesis but also for the initiation of all mRNA translation through initiator tRNA(fMet) aminoacylation. The chain is Methionine--tRNA ligase from Shewanella sp. (strain MR-7).